Consider the following 388-residue polypeptide: Chorismate synthase (388 aa).

Residues arginine 39 and arginine 45 each coordinate NADP(+). Residues 130 to 132 (RSS), 251 to 252 (NA), alanine 296, 311 to 315 (KPIPT), and arginine 337 each bind FMN.

The protein belongs to the chorismate synthase family. As to quaternary structure, homotetramer. It depends on FMNH2 as a cofactor.

The enzyme catalyses 5-O-(1-carboxyvinyl)-3-phosphoshikimate = chorismate + phosphate. Its pathway is metabolic intermediate biosynthesis; chorismate biosynthesis; chorismate from D-erythrose 4-phosphate and phosphoenolpyruvate: step 7/7. Functionally, catalyzes the anti-1,4-elimination of the C-3 phosphate and the C-6 proR hydrogen from 5-enolpyruvylshikimate-3-phosphate (EPSP) to yield chorismate, which is the branch point compound that serves as the starting substrate for the three terminal pathways of aromatic amino acid biosynthesis. This reaction introduces a second double bond into the aromatic ring system. In Streptococcus equi subsp. zooepidemicus (strain MGCS10565), this protein is Chorismate synthase.